The primary structure comprises 517 residues: Aldehyde dehydrogenase X, mitochondrial (517 aa).

The N-terminal 17 residues, 1 to 17 (MLRFLAPRLLSLQGRTA), are a transit peptide targeting the mitochondrion. Lys-51 is modified (N6-acetyllysine). Lys-52 carries the N6-acetyllysine; alternate modification. Residue Lys-52 is modified to N6-succinyllysine; alternate. An N6-succinyllysine modification is found at Lys-81. 262–267 (GSTEVG) is an NAD(+) binding site. The Proton acceptor role is filled by Glu-285. Residue Cys-319 is the Nucleophile of the active site. N6-acetyllysine; alternate is present on residues Lys-364, Lys-383, Lys-399, Lys-414, and Lys-426. 5 positions are modified to N6-succinyllysine; alternate: Lys-364, Lys-383, Lys-399, Lys-414, and Lys-426. An N6-acetyllysine modification is found at Lys-429.

Belongs to the aldehyde dehydrogenase family. As to quaternary structure, homotetramer.

The protein localises to the mitochondrion matrix. The enzyme catalyses an aldehyde + NAD(+) + H2O = a carboxylate + NADH + 2 H(+). Its pathway is alcohol metabolism; ethanol degradation; acetate from ethanol: step 2/2. Functionally, ALDHs play a major role in the detoxification of alcohol-derived acetaldehyde. They are involved in the metabolism of corticosteroids, biogenic amines, neurotransmitters, and lipid peroxidation. The protein is Aldehyde dehydrogenase X, mitochondrial (ALDH1B1) of Pongo abelii (Sumatran orangutan).